A 251-amino-acid chain; its full sequence is Probable transcriptional regulatory protein DET0444 (251 aa).

This sequence belongs to the TACO1 family.

It is found in the cytoplasm. The polypeptide is Probable transcriptional regulatory protein DET0444 (Dehalococcoides mccartyi (strain ATCC BAA-2266 / KCTC 15142 / 195) (Dehalococcoides ethenogenes (strain 195))).